The sequence spans 326 residues: Beta-ketoacyl-[acyl-carrier-protein] synthase III (326 aa).

Catalysis depends on residues Cys111 and His253. Positions 254-258 (QANSR) are ACP-binding. Residue Asn283 is part of the active site.

Belongs to the thiolase-like superfamily. FabH family. As to quaternary structure, homodimer.

It localises to the cytoplasm. It carries out the reaction malonyl-[ACP] + acetyl-CoA + H(+) = 3-oxobutanoyl-[ACP] + CO2 + CoA. Its pathway is lipid metabolism; fatty acid biosynthesis. Catalyzes the condensation reaction of fatty acid synthesis by the addition to an acyl acceptor of two carbons from malonyl-ACP. Catalyzes the first condensation reaction which initiates fatty acid synthesis and may therefore play a role in governing the total rate of fatty acid production. Possesses both acetoacetyl-ACP synthase and acetyl transacylase activities. Its substrate specificity determines the biosynthesis of branched-chain and/or straight-chain of fatty acids. In Latilactobacillus sakei subsp. sakei (strain 23K) (Lactobacillus sakei subsp. sakei), this protein is Beta-ketoacyl-[acyl-carrier-protein] synthase III.